The sequence spans 306 residues: Formamidopyrimidine-DNA glycosylase (306 aa).

Pro-2 (schiff-base intermediate with DNA) is an active-site residue. Glu-3 (proton donor) is an active-site residue. The active-site Proton donor; for beta-elimination activity is Lys-58. Positions 114, 136, and 179 each coordinate DNA. Residues Ser-270–Lys-306 form an FPG-type zinc finger. Arg-296 acts as the Proton donor; for delta-elimination activity in catalysis.

Belongs to the FPG family. Monomer. Requires Zn(2+) as cofactor.

It catalyses the reaction Hydrolysis of DNA containing ring-opened 7-methylguanine residues, releasing 2,6-diamino-4-hydroxy-5-(N-methyl)formamidopyrimidine.. The catalysed reaction is 2'-deoxyribonucleotide-(2'-deoxyribose 5'-phosphate)-2'-deoxyribonucleotide-DNA = a 3'-end 2'-deoxyribonucleotide-(2,3-dehydro-2,3-deoxyribose 5'-phosphate)-DNA + a 5'-end 5'-phospho-2'-deoxyribonucleoside-DNA + H(+). In terms of biological role, involved in base excision repair of DNA damaged by oxidation or by mutagenic agents. Acts as a DNA glycosylase that recognizes and removes damaged bases. Has a preference for oxidized purines, such as 7,8-dihydro-8-oxoguanine (8-oxoG). Has AP (apurinic/apyrimidinic) lyase activity and introduces nicks in the DNA strand. Cleaves the DNA backbone by beta-delta elimination to generate a single-strand break at the site of the removed base with both 3'- and 5'-phosphates. The sequence is that of Formamidopyrimidine-DNA glycosylase from Sinorhizobium medicae (strain WSM419) (Ensifer medicae).